The chain runs to 910 residues: Leucine--tRNA ligase (910 aa).

Positions 42 to 52 (PYPSGKLHMGH) match the 'HIGH' region motif. Positions 658–662 (TMSKS) match the 'KMSKS' region motif. Lys661 is an ATP binding site.

This sequence belongs to the class-I aminoacyl-tRNA synthetase family.

The protein resides in the cytoplasm. The catalysed reaction is tRNA(Leu) + L-leucine + ATP = L-leucyl-tRNA(Leu) + AMP + diphosphate. In Acidovorax sp. (strain JS42), this protein is Leucine--tRNA ligase.